The following is a 393-amino-acid chain: Fractalkine (393 aa).

An N-terminal signal peptide occupies residues 1-24 (MAPSQLAWLLRLAAFFHLCTLLAG). Positions 25–100 (QHLGMTKCNI…HQTAALTRNG (76 aa)) are chemokine and involved in interaction with ITGAV:ITGB3 and ITGA4:ITGB1. Over 25 to 337 (QHLGMTKCNI…PDSQAATRRQ (313 aa)) the chain is Extracellular. Cystine bridges form between C32–C58 and C36–C74. N33 carries N-linked (GlcNAc...) asparagine glycosylation. The interval 101–337 (GKFEKRVDNV…PDSQAATRRQ (237 aa)) is mucin-like stalk. Disordered stretches follow at residues 114 to 184 (ITSA…PQST) and 213 to 303 (EKAT…SGSQ). Composition is skewed to polar residues over residues 153-172 (GTSQEPPAAVTGSSPSTSKA) and 223-240 (ALSTQASTTSSPKQNVGS). Residues 338 to 358 (AVGLLAFLGLLFCLGVAMFAY) traverse the membrane as a helical segment. Over 359–393 (QSLQGCPRKMAGEMVEGLRYVPRSCGSNSYVLVPV) the chain is Cytoplasmic.

The protein belongs to the intercrine delta family. As to quaternary structure, monomer. Forms a ternary complex with CX3CR1 and ITGAV:ITGB3 or ITGA4:ITGB1. A soluble short form may be released by proteolytic cleavage from the long membrane-anchored form. As to expression, highest levels in brain (neurons). Significant levels in kidney, heart, lung and adrenal gland.

The protein resides in the cell membrane. The protein localises to the secreted. Functionally, chemokine that acts as a ligand for both CX3CR1 and integrins ITGAV:ITGB3 and ITGA4:ITGB1. The CX3CR1-CX3CL1 signaling exerts distinct functions in different tissue compartments, such as immune response, inflammation, cell adhesion and chemotaxis. Regulates leukocyte adhesion and migration processes at the endothelium. Can activate integrins in both a CX3CR1-dependent and CX3CR1-independent manner. In the presence of CX3CR1, activates integrins by binding to the classical ligand-binding site (site 1) in integrins. In the absence of CX3CR1, binds to a second site (site 2) in integrins which is distinct from site 1 and enhances the binding of other integrin ligands to site 1. The soluble form is chemotactic for T-cells and monocytes, but not for neutrophils. In terms of biological role, the membrane-bound form promotes adhesion of those leukocytes to endothelial cells. The polypeptide is Fractalkine (Cx3cl1) (Rattus norvegicus (Rat)).